Here is a 223-residue protein sequence, read N- to C-terminus: Deoxyribose-phosphate aldolase (223 aa).

The active-site Proton donor/acceptor is Asp91. Lys153 functions as the Schiff-base intermediate with acetaldehyde in the catalytic mechanism. Lys182 functions as the Proton donor/acceptor in the catalytic mechanism.

It belongs to the DeoC/FbaB aldolase family. DeoC type 1 subfamily.

The protein localises to the cytoplasm. It catalyses the reaction 2-deoxy-D-ribose 5-phosphate = D-glyceraldehyde 3-phosphate + acetaldehyde. Its pathway is carbohydrate degradation; 2-deoxy-D-ribose 1-phosphate degradation; D-glyceraldehyde 3-phosphate and acetaldehyde from 2-deoxy-alpha-D-ribose 1-phosphate: step 2/2. In terms of biological role, catalyzes a reversible aldol reaction between acetaldehyde and D-glyceraldehyde 3-phosphate to generate 2-deoxy-D-ribose 5-phosphate. The protein is Deoxyribose-phosphate aldolase of Yersinia pestis bv. Antiqua (strain Angola).